We begin with the raw amino-acid sequence, 128 residues long: MSKTIATENAPAAIGPYVQGVDLGSMVITSGQIPVDPKTGAVAEDVSAQARQSLENVKAIVEAAGLKVGDIVKTTVFVKDLNDFATVNATYEAFFTEHNATFPARSCVEVARLPKDVKIEIEAIAVRR.

Arginine 105 lines the substrate pocket.

The protein belongs to the RutC family. Homotrimer.

The protein localises to the cytoplasm. It catalyses the reaction 2-iminobutanoate + H2O = 2-oxobutanoate + NH4(+). The enzyme catalyses 2-iminopropanoate + H2O = pyruvate + NH4(+). The protein operates within amino-acid biosynthesis; L-isoleucine biosynthesis; 2-oxobutanoate from L-threonine. Functionally, accelerates the release of ammonia from reactive enamine/imine intermediates of the PLP-dependent threonine dehydratase (IlvA) in the low water environment of the cell. It catalyzes the deamination of enamine/imine intermediates to yield 2-ketobutyrate and ammonia. It is required for the detoxification of reactive intermediates of IlvA due to their highly nucleophilic abilities and to avoid they are captured by anthranilate phosphoribosyltransferase (TrpD) to generate PRA, an intermediate in the alternative pyrimidine biosynthetic (APB) pathway. Also required for full activity of IlvE which is involved in the isoleucine biosynthesis. RidA also accelerates the release of pyruvate produced by IlvA from L-serine. In Salmonella typhimurium (strain LT2 / SGSC1412 / ATCC 700720), this protein is 2-iminobutanoate/2-iminopropanoate deaminase.